The chain runs to 218 residues: Cytochrome c biogenesis ATP-binding export protein CcmA (218 aa).

One can recognise an ABC transporter domain in the interval 2–217 (LEAKNLTCIR…KSCLSACCAV (216 aa)). Residue 34–41 (GPNGAGKT) coordinates ATP.

Belongs to the ABC transporter superfamily. CcmA exporter (TC 3.A.1.107) family. In terms of assembly, the complex is composed of two ATP-binding proteins (CcmA) and two transmembrane proteins (CcmB).

The protein localises to the cell inner membrane. It catalyses the reaction heme b(in) + ATP + H2O = heme b(out) + ADP + phosphate + H(+). In terms of biological role, part of the ABC transporter complex CcmAB involved in the biogenesis of c-type cytochromes; once thought to export heme, this seems not to be the case, but its exact role is uncertain. Responsible for energy coupling to the transport system. The protein is Cytochrome c biogenesis ATP-binding export protein CcmA of Yersinia pseudotuberculosis serotype I (strain IP32953).